The following is a 117-amino-acid chain: Holo-[acyl-carrier-protein] synthase (117 aa).

Positions 8 and 59 each coordinate Mg(2+).

The protein belongs to the P-Pant transferase superfamily. AcpS family. Mg(2+) is required as a cofactor.

The protein resides in the cytoplasm. The catalysed reaction is apo-[ACP] + CoA = holo-[ACP] + adenosine 3',5'-bisphosphate + H(+). Its function is as follows. Transfers the 4'-phosphopantetheine moiety from coenzyme A to a Ser of acyl-carrier-protein. The chain is Holo-[acyl-carrier-protein] synthase from Staphylococcus carnosus (strain TM300).